The chain runs to 186 residues: Ribosome-recycling factor (186 aa).

It belongs to the RRF family.

It localises to the cytoplasm. In terms of biological role, responsible for the release of ribosomes from messenger RNA at the termination of protein biosynthesis. May increase the efficiency of translation by recycling ribosomes from one round of translation to another. The protein is Ribosome-recycling factor of Chlorobium phaeobacteroides (strain BS1).